Reading from the N-terminus, the 275-residue chain is DNA repair protein RecO (275 aa).

The interval 1 to 38 is disordered; sequence MTDEADADPQPFAAPPATGAPAADKPARKPRRAAPRTS. The segment covering 8–24 has biased composition (low complexity); sequence DPQPFAAPPATGAPAAD.

This sequence belongs to the RecO family.

Involved in DNA repair and RecF pathway recombination. This Burkholderia pseudomallei (strain 1710b) protein is DNA repair protein RecO.